Here is a 1104-residue protein sequence, read N- to C-terminus: Receptor-type guanylate cyclase gcy-15 (1104 aa).

The Extracellular portion of the chain corresponds to 1 to 431 (MEIAINRLNA…ENCGPPANNT (431 aa)). Asn43, Asn237, Asn263, Asn287, Asn407, and Asn429 each carry an N-linked (GlcNAc...) asparagine glycan. Residues 432–452 (FIIVISVGVAVLIGLAIAAAF) traverse the membrane as a helical segment. Residues 453–1104 (LYKRYRYERR…QIQEKTYEFS (652 aa)) lie on the Cytoplasmic side of the membrane. Residues 528 to 823 (FNTGSTARAG…QIKRKLKPLT (296 aa)) form the Protein kinase domain. ATP-binding positions include 534–542 (ARAGPFGPI) and Lys576. A coiled-coil region spans residues 838–871 (IEKYTDKLEKDIAERNEELEAEKAKSEALLKMML). Residues 894-1024 (TVFFSDCPGF…DTVNTASRME (131 aa)) form the Guanylate cyclase domain.

This sequence belongs to the adenylyl cyclase class-4/guanylyl cyclase family. As to expression, expressed bilaterally in ASG sensory neurons.

The protein resides in the cell membrane. The enzyme catalyses GTP = 3',5'-cyclic GMP + diphosphate. In terms of biological role, guanylate cyclase involved in the production of the second messenger cGMP. The protein is Receptor-type guanylate cyclase gcy-15 of Caenorhabditis elegans.